The sequence spans 165 residues: Free methionine-R-sulfoxide reductase (165 aa).

Residues 49–149 enclose the GAF domain; the sequence is LLEDDTLVLG…LRQLVAQLEK (101 aa).

The protein belongs to the free Met sulfoxide reductase family.

The enzyme catalyses [thioredoxin]-disulfide + L-methionine + H2O = L-methionine (R)-S-oxide + [thioredoxin]-dithiol. Its function is as follows. Catalyzes the reversible oxidation-reduction of the R-enantiomer of free methionine sulfoxide to methionine. Specific for free L-methionine-(R)-S-oxide. This chain is Free methionine-R-sulfoxide reductase (msrC), found in Escherichia coli (strain K12).